The chain runs to 218 residues: MRTRVKICGLTREQDIASAVQAGADAIGFVFYPASKRHVDPVRAAQLRREVPAFVDVVALFVNPRPDEVQAVLDHVAPDLLQFHGDETPQDCGRYGRRYLRAFRAGAPGLDSAAGLAAACRQYADAAGWLFDSYSAGYGGSGQGFDHGLLAGVQADPASRAIVLAGGLHPGNVADAVRAVRPWALDVSSGVEDAPGVKSADKIRQLMAAIKSVDQVAR.

It belongs to the TrpF family.

It catalyses the reaction N-(5-phospho-beta-D-ribosyl)anthranilate = 1-(2-carboxyphenylamino)-1-deoxy-D-ribulose 5-phosphate. The protein operates within amino-acid biosynthesis; L-tryptophan biosynthesis; L-tryptophan from chorismate: step 3/5. The sequence is that of N-(5'-phosphoribosyl)anthranilate isomerase from Bordetella bronchiseptica (strain ATCC BAA-588 / NCTC 13252 / RB50) (Alcaligenes bronchisepticus).